The primary structure comprises 665 residues: PR5-like receptor kinase (665 aa).

Positions 1–24 are cleaved as a signal peptide; that stretch reads MVEGFSLSLMFLLVSHFFVSGVMS. The Extracellular segment spans residues 25-276; the sequence is RNFTIENKCD…TKQKSSWKLK (252 aa). N-linked (GlcNAc...) asparagine glycosylation is found at Asn-26 and Asn-88. Intrachain disulfides connect Cys-33–Cys-249, Cys-81–Cys-91, Cys-96–Cys-103, Cys-153–Cys-238, Cys-158–Cys-221, Cys-166–Cys-184, Cys-188–Cys-197, and Cys-198–Cys-208. Asn-163 is a glycosylation site (N-linked (GlcNAc...) asparagine). A glycan (N-linked (GlcNAc...) asparagine) is linked at Asn-233. A helical membrane pass occupies residues 277–297; that stretch reads LIVGVSAALTLMILIVVVIIV. At 298 to 665 the chain is on the cytoplasmic side; sequence RTKNMRNSEW…DVLQHGSRSS (368 aa). The 290-residue stretch at 331–620 folds into the Protein kinase domain; it reads NSFAHVLGKG…ALQVPPNPLL (290 aa). ATP is bound by residues 337–345 and Lys-360; that span reads LGKGGFGTV. Asp-455 acts as the Proton acceptor in catalysis.

It in the N-terminal section; belongs to the thaumatin family. This sequence in the C-terminal section; belongs to the protein kinase superfamily. Ser/Thr protein kinase family. Post-translationally, autophosphorylated in vitro. In terms of tissue distribution, expressed in roots. Expressed at low levels in stems.

It localises to the membrane. It carries out the reaction L-seryl-[protein] + ATP = O-phospho-L-seryl-[protein] + ADP + H(+). The enzyme catalyses L-threonyl-[protein] + ATP = O-phospho-L-threonyl-[protein] + ADP + H(+). Its function is as follows. Possesses kinase activity in vitro. This Arabidopsis thaliana (Mouse-ear cress) protein is PR5-like receptor kinase.